Reading from the N-terminus, the 504-residue chain is Dolichol kinase sec59 (504 aa).

Residues 1-55 lie on the Cytoplasmic side of the membrane; it reads MYIMSKKCYDTSEKIDREQECVEVNYQHRNFESILEIFSVLFIPFLCNSGKKFLQ. Residues 56–76 traverse the membrane as a helical segment; sequence ISNASFFLPACFYLLGSSSII. Residue Gln77 is a topological domain, lumenal. Residues 78-98 traverse the membrane as a helical segment; the sequence is LYEPLLWLSSFPFCILYVGFG. Residues 99–157 lie on the Cytoplasmic side of the membrane; that stretch reads ENSVLYHEMYTVCLYNALLSLTQRWKWLSIVLDGLGNSSVNLKLHETVILAFLEITQNS. A helical transmembrane segment spans residues 158–178; the sequence is FTFIEGILICTGLTGLCFATF. Residues 179–187 lie on the Lumenal side of the membrane; the sequence is SYEVSPVVS. A helical transmembrane segment spans residues 188–208; sequence VLSGVLLISLPTLILLNLCIL. The Cytoplasmic portion of the chain corresponds to 209–215; it reads KLAAKLH. Residues 216 to 236 traverse the membrane as a helical segment; sequence LSALFTTCLIYFFSALLVFLV. Over 237 to 263 the chain is Lumenal; that stretch reads SRSWVAGQLGQAPEVWLFNQIFSHRNS. A helical transmembrane segment spans residues 264-284; sequence LTRIKIIIWWIICLGCFIFIL. Residues 285–325 lie on the Cytoplasmic side of the membrane; it reads LRSNRNNPLGKYFTTEDEVLNFRRKTYHALVVFLFLPVCCL. Residues 326–347 traverse the membrane as a helical segment; that stretch reads DPHFLHLSFSGVLFIFLFVEGI. The Lumenal portion of the chain corresponds to 348–373; the sequence is RILRLKPFGKMIHEFLWEYTDNRDHK. A helical membrane pass occupies residues 374 to 394; sequence GPLIISHIYLLIGCAIPIWLS. The Cytoplasmic segment spans residues 395–403; that stretch reads NALKGPVAS. A helical membrane pass occupies residues 404-424; that stretch reads VELLVGVLCLGCGDSMASIIG. The Lumenal segment spans residues 425–440; the sequence is KRFGKHRISKTNKSIE. Residues 441-461 traverse the membrane as a helical segment; it reads GVFAFSISVFLVLHLTQAFHV. Cys462 is a topological domain (cytoplasmic). Residues 463 to 483 form a helical membrane-spanning segment; sequence PSVTFWKTLFMSLCTAILEGV. The Lumenal portion of the chain corresponds to 484-504; sequence STENDNLILPMYMWVLYQALD.

Belongs to the polyprenol kinase family.

The protein resides in the endoplasmic reticulum membrane. The catalysed reaction is a di-trans,poly-cis-dolichol + CTP = a di-trans,poly-cis-dolichyl phosphate + CDP + H(+). It functions in the pathway protein modification; protein glycosylation. Its function is as follows. Catalyzes CTP-mediated phosphorylation of dolichol, the terminal step in de novo dolichyl monophosphate (Dol-P) biosynthesis. Dol-P is a lipid carrier essential for the synthesis of N-linked and O-linked oligosaccharides and for GPI anchors. This chain is Dolichol kinase sec59, found in Schizosaccharomyces pombe (strain 972 / ATCC 24843) (Fission yeast).